The primary structure comprises 438 residues: Glutamyl-tRNA(Gln) amidotransferase subunit D (438 aa).

The 331-residue stretch at 92–422 folds into the Asparaginase/glutaminase domain; sequence PDVTIIGTGG…EEVRRMMLTN (331 aa). Residues T102, T178, D179, and K256 contribute to the active site.

The protein belongs to the asparaginase 1 family. GatD subfamily. In terms of assembly, heterodimer of GatD and GatE.

It catalyses the reaction L-glutamyl-tRNA(Gln) + L-glutamine + ATP + H2O = L-glutaminyl-tRNA(Gln) + L-glutamate + ADP + phosphate + H(+). Functionally, allows the formation of correctly charged Gln-tRNA(Gln) through the transamidation of misacylated Glu-tRNA(Gln) in organisms which lack glutaminyl-tRNA synthetase. The reaction takes place in the presence of glutamine and ATP through an activated gamma-phospho-Glu-tRNA(Gln). The GatDE system is specific for glutamate and does not act on aspartate. This chain is Glutamyl-tRNA(Gln) amidotransferase subunit D, found in Pyrococcus horikoshii (strain ATCC 700860 / DSM 12428 / JCM 9974 / NBRC 100139 / OT-3).